The sequence spans 380 residues: All-trans-retinol dehydrogenase [NAD(+)] ADH4 (380 aa).

Zn(2+) is bound at residue cysteine 47. Residue histidine 48–threonine 49 coordinates NAD(+). Residues histidine 69, cysteine 99, cysteine 102, cysteine 105, and cysteine 113 each coordinate Zn(2+). Phosphoserine is present on serine 121. Position 180 (cysteine 180) interacts with Zn(2+). NAD(+)-binding positions include glycine 205–glycine 210, aspartate 229, and lysine 234. Serine 278 carries the phosphoserine modification. NAD(+)-binding positions include isoleucine 298 to valine 300, threonine 323 to phenylalanine 325, and arginine 375.

The protein belongs to the zinc-containing alcohol dehydrogenase family. Class-II subfamily. In terms of assembly, homodimer. It depends on Zn(2+) as a cofactor.

It localises to the cytoplasm. It catalyses the reaction all-trans-retinol + NAD(+) = all-trans-retinal + NADH + H(+). It carries out the reaction 9-cis-retinol + NAD(+) = 9-cis-retinal + NADH + H(+). The enzyme catalyses 20-oxo-(5Z,8Z,11Z,14Z)-eicosatetraenoate + NAD(+) + H2O = (5Z,8Z,11Z,14Z)-eicosatetraenedioate + NADH + 2 H(+). The catalysed reaction is 20-hydroxy-(5Z,8Z,11Z,14Z)-eicosatetraenoate + NAD(+) = 20-oxo-(5Z,8Z,11Z,14Z)-eicosatetraenoate + NADH + H(+). It catalyses the reaction 1,4-benzoquinone + NADH + H(+) = hydroquinone + NAD(+). Oxydation of 20-HETE is inhibited by low concentrations of N-heptylformamide. Oxydation of 20-HETE is a decreased by 55-65% by either all-trans-retinol or all-trans-retinoic acid. Strongly inhibited by omega-hydroxy fatty acids. Functionally, catalyzes the NAD-dependent oxidation of either all-trans-retinol or 9-cis-retinol. Also oxidizes long chain omega-hydroxy fatty acids, such as 20-HETE, producing both the intermediate aldehyde, 20-oxoarachidonate and the end product, a dicarboxylic acid, (5Z,8Z,11Z,14Z)-eicosatetraenedioate. Also catalyzes the reduction of benzoquinones. This is All-trans-retinol dehydrogenase [NAD(+)] ADH4 from Homo sapiens (Human).